Consider the following 320-residue polypeptide: MIKKIGVLTSGGDAPGMNAAIRGVVRAALTEGLEVFGVYDGYLGLYEDRMVQLDRYSVSDMINRGGTFLGSARFPEFRDEHVREVAIENMKKRGLDALVVIGGDGSYMGAKRLTEMGFPCIGLPGTIDNDIKGTDYTIGFFTALGTVVEAIDRLRDTSSSHQRISIVEVMGRYCGDLTLAAAIAGGCEFIVVPEVEFSREDLVAEIKAGIAKGKKHAIVAITEHICDVDELAKYIEAETKRETRATVLGHIQRGGSPGPYDRILASRMGAYAIDLLLQGHGGRCVGIQNEKLVHHDIIDAIENMKRPFKGDWLDCAKKLY.

G12 is an ATP binding site. Residues 22–26 (RGVVR) and 55–60 (RYSVSD) each bind ADP. ATP contacts are provided by residues 73–74 (RF) and 103–106 (GDGS). D104 is a Mg(2+) binding site. 126-128 (TID) provides a ligand contact to substrate. D128 acts as the Proton acceptor in catalysis. R155 is an ADP binding site. Substrate-binding positions include R163 and 170–172 (MGR). ADP-binding positions include 186–188 (GCE), K212, and 214–216 (KKH). Substrate is bound by residues E223, R244, and 250-253 (HIQR).

This sequence belongs to the phosphofructokinase type A (PFKA) family. ATP-dependent PFK group I subfamily. Prokaryotic clade 'B1' sub-subfamily. As to quaternary structure, homotetramer. The cofactor is Mg(2+).

Its subcellular location is the cytoplasm. It catalyses the reaction beta-D-fructose 6-phosphate + ATP = beta-D-fructose 1,6-bisphosphate + ADP + H(+). Its pathway is carbohydrate degradation; glycolysis; D-glyceraldehyde 3-phosphate and glycerone phosphate from D-glucose: step 3/4. Its activity is regulated as follows. Allosterically activated by ADP and other diphosphonucleosides, and allosterically inhibited by phosphoenolpyruvate. In terms of biological role, catalyzes the phosphorylation of D-fructose 6-phosphate to fructose 1,6-bisphosphate by ATP, the first committing step of glycolysis. This chain is ATP-dependent 6-phosphofructokinase, found in Enterobacter cloacae.